The following is a 57-amino-acid chain: Dendroaspis polylepis MT9 (57 aa).

Cystine bridges form between C3–C22, C17–C36, C38–C49, and C50–C55.

The protein belongs to the three-finger toxin family. Short-chain subfamily. As to expression, expressed by the venom gland.

It localises to the secreted. In terms of biological role, when tested on muscarinic GPCR, specifically antagonizes the type 2 receptor (CHRM2) subtype (Ki/Kd=120-399 nM). Ex vivo, it reverses the M2R-agonist-induced relaxation in rat and human arteries. This chain is Dendroaspis polylepis MT9, found in Dendroaspis polylepis polylepis (Black mamba).